A 140-amino-acid chain; its full sequence is N14 matrix protein (140 aa).

The signal sequence occupies residues 1–25 (MACTLRLTIAALVLLGICHLSRPVA).

This sequence belongs to the N16 matrix protein family. In terms of assembly, heterooligomer; disulfide-linked. Pif97, Pif80, N16 and other proteins form a complex. Component of conchiolin, the organic matrix of nacre. Only expressed in the dorsal region of the mantle.

It is found in the secreted. It localises to the extracellular space. Its subcellular location is the extracellular matrix. In terms of biological role, may be specifically involved in the formation of the nacreous layer. The polypeptide is N14 matrix protein (Pinctada maxima (Silver-lipped pearl oyster)).